We begin with the raw amino-acid sequence, 218 residues long: Glutathione S-transferase Mu 4 (218 aa).

One can recognise a GST N-terminal domain in the interval 2-88 (SMTLGYWDIR…YIARKHNLCG (87 aa)). Residues 7 to 8 (YW), 46 to 50 (WLNEK), 59 to 60 (NL), and 72 to 73 (QS) each bind glutathione. The GST C-terminal domain occupies 90 to 208 (TEEEKIRVDI…KSSRFLPKPL (119 aa)). Tyrosine 116 contributes to the substrate binding site.

This sequence belongs to the GST superfamily. Mu family. Homodimer. Expressed in a wide variety of tissues.

It localises to the cytoplasm. It catalyses the reaction RX + glutathione = an S-substituted glutathione + a halide anion + H(+). It carries out the reaction 1-chloro-2,4-dinitrobenzene + glutathione = 2,4-dinitrophenyl-S-glutathione + chloride + H(+). The catalysed reaction is (13S,14S)-epoxy-(4Z,7Z,9E,11E,16Z,19Z)-docosahexaenoate + glutathione = (13R)-S-glutathionyl-(14S)-hydroxy-(4Z,7Z,9E,11E,16Z,19Z)-docosahexaenoate. The enzyme catalyses leukotriene C4 = leukotriene A4 + glutathione. In terms of biological role, conjugation of reduced glutathione to a wide number of exogenous and endogenous hydrophobic electrophiles. Catalyzes the conjugation of leukotriene A4 with reduced glutathione (GSH) to form leukotriene C4. Can also catalyze the transfer of a glutathionyl group from glutathione (GSH) to 13(S),14(S)-epoxy-docosahexaenoic acid to form maresin conjugate in tissue regeneration 1 (MCTR1), a bioactive lipid mediator that possess potent anti-inflammatory and proresolving actions. This is Glutathione S-transferase Mu 4 (GSTM4) from Homo sapiens (Human).